Reading from the N-terminus, the 60-residue chain is U-scutigerotoxin(02)-Tl4a (60 aa).

The protein belongs to the scutigerotoxin-02 family. Post-translationally, contains 3 disulfide bonds. As to expression, expressed by the venom gland.

It is found in the secreted. In Thereuopoda longicornis (Long-legged centipede), this protein is U-scutigerotoxin(02)-Tl4a.